Consider the following 172-residue polypeptide: Stellate protein CG33247 (172 aa).

The protein belongs to the casein kinase 2 subunit beta family. In terms of assembly, interacts in vitro with the casein kinase 2 alpha subunit (CkII-alpha). The relevance of such interaction is however unclear in vivo. As to expression, probably not expressed in wild-type flies. In males lacking the Y chromosome, it is testis-specific and constitutes the main component of star-shaped crystals.

Its function is as follows. Unknown. In males lacking the Y chromosome, its strong overexpression leads to the appearance of proteinaceous star-shaped crystals in the primary spermatocytes causing meiotic drive, possibly by interfering with normal casein kinase 2 activity. The sequence is that of Stellate protein CG33247 (Ste:CG33247) from Drosophila melanogaster (Fruit fly).